The primary structure comprises 346 residues: 3-dehydroquinate synthase (346 aa).

Residues 61–66, 95–99, 119–120, Lys-132, and Lys-141 contribute to the NAD(+) site; these read DGEAYK, GVIGD, and TT. Residues Glu-174, His-233, and His-250 each contribute to the Zn(2+) site.

This sequence belongs to the sugar phosphate cyclases superfamily. Dehydroquinate synthase family. NAD(+) is required as a cofactor. Requires Co(2+) as cofactor. Zn(2+) serves as cofactor.

The protein resides in the cytoplasm. It carries out the reaction 7-phospho-2-dehydro-3-deoxy-D-arabino-heptonate = 3-dehydroquinate + phosphate. The protein operates within metabolic intermediate biosynthesis; chorismate biosynthesis; chorismate from D-erythrose 4-phosphate and phosphoenolpyruvate: step 2/7. Catalyzes the conversion of 3-deoxy-D-arabino-heptulosonate 7-phosphate (DAHP) to dehydroquinate (DHQ). In Wolinella succinogenes (strain ATCC 29543 / DSM 1740 / CCUG 13145 / JCM 31913 / LMG 7466 / NCTC 11488 / FDC 602W) (Vibrio succinogenes), this protein is 3-dehydroquinate synthase.